The sequence spans 2038 residues: Homeotic protein female sterile (2038 aa).

Residues 34 to 140 form the Bromo 1 domain; sequence RNTNQLQYLI…KVFLQKIESM (107 aa). The segment at 145–284 is disordered; it reads LELEPVTAKG…TTAMAGGVGG (140 aa). Composition is skewed to low complexity over residues 177–209 and 268–279; these read GSGT…SGLQ and PGSTNTTTTAMA. The chain crosses the membrane as a helical span at residues 330–350; the sequence is AAVAAAAAAAAAAAAAAGGAA. The segment at 396–432 is disordered; the sequence is KGVKRKADTTTPTANAFESPYTQMDSKSAKIATRRES. Residues 404–421 are compositionally biased toward polar residues; the sequence is TTTPTANAFESPYTQMDS. A helical transmembrane segment spans residues 451–471; that stretch reads VSGVPGLGGLVAGGVAGVAVA. Ser452 is subject to Phosphoserine. The region spanning 475 to 584 is the Bromo 2 domain; it reads EKLSDALKSC…DVFEMRYANI (110 aa). Disordered regions lie at residues 590–655 and 677–735; these read ANAA…ERSA and EASA…SVPG. The span at 593 to 619 shows a compositional bias: basic residues; sequence AHHHGHGHGHGHGHGHGHGHGHGHGHG. Positions 636–649 are enriched in acidic residues; that stretch reads SSEDSSDTENESNS. Basic residues predominate over residues 681-694; it reads KKKAKKKLKEKKKS. Residues 711 to 735 show a composition bias toward gly residues; it reads TGGGANAGGAGGPGSGGHGSVSVPG. The next 3 membrane-spanning stretches (helical) occupy residues 750-770, 790-810, and 816-830; these read LNAL…AGGV, MAGG…AAGA, and AGTL…AAAG. Disordered regions lie at residues 832 to 858, 891 to 956, 1016 to 1139, 1217 to 1260, 1384 to 1416, 1502 to 1530, 1580 to 1616, 1645 to 1728, 1745 to 1918, and 1957 to 2023; these read GGTT…SGAG, AGAA…SYDE, CLRK…GGNL, AVSA…ATVA, QPAG…QQQQ, MQQM…QQQH, IESM…PNAA, WSSL…VAQA, AAAA…SGAI, and MESG…GQID. Residues 874–894 form a helical membrane-spanning segment; sequence GAAGAAAGAGSVGGVGGAGAA. Over residues 910 to 927 the composition is skewed to gly residues; sequence GAGGGVGGANASAGGAGA. The 83-residue stretch at 942–1024 folds into the NET domain; the sequence is DSEEEDTAKP…SCLRKKTHKK (83 aa). At Ser943 the chain carries Phosphoserine. Basic residues predominate over residues 1017 to 1027; that stretch reads LRKKTHKKPSG. The segment covering 1028-1046 has biased composition (basic and acidic residues); that stretch reads KSKDEQMAEKKQELEKRLQ. Low complexity predominate over residues 1079-1100; it reads SSSSSSSDSSSSSSSDSSSSDS. Polar residues-rich tracts occupy residues 1121–1131 and 1222–1232; these read SNGSNVNNPSI and TGQQHNKNGPN. Residues 1645 to 1665 show a composition bias toward low complexity; the sequence is WSSLASANSPQSHTSSSSSSS. Ser1653 is subject to Phosphoserine. The span at 1680-1708 shows a compositional bias: basic and acidic residues; sequence KAKERDRLKLLEAAEKEKKNQKEAAEKEQ. 2 stretches are compositionally biased toward low complexity: residues 1716-1728 and 1745-1760; these read SSSS…VAQA and AAAA…PSGG. Residues 1731–1751 traverse the membrane as a helical segment; it reads IAAATAAAAVTLGAAAAAALA. Residues 1776–1791 are compositionally biased toward basic and acidic residues; that stretch reads GDRDRDRDRERERERS. A compositionally biased stretch (low complexity) spans 1800–1813; the sequence is NGNNSSNSANSNGP. Composition is skewed to gly residues over residues 1814–1828 and 1835–1856; these read GSAG…GGSG and PNSG…GGGP. Over residues 1857-1884 the composition is skewed to low complexity; sequence ALLNAGSNSNSGVGSGGAASSNSNSSVG. Over residues 1885-1915 the composition is skewed to gly residues; sequence GIVGSGGPGSNSQGSSGGGGGGPASGGGMGS. A helical transmembrane segment spans residues 1939-1959; the sequence is VAAAVAAQAILAASPLGAMES. A phosphoserine mark is found at Ser1980 and Ser1988. Positions 1986 to 1997 are enriched in low complexity; the sequence is QSSPAQQSPQDR. A compositionally biased stretch (basic and acidic residues) spans 1998-2017; that stretch reads AAAKRAEQRRAEQERRRREA.

It localises to the membrane. In terms of biological role, required maternally for proper expression of other homeotic genes involved in pattern formation, such as Ubx. The protein is Homeotic protein female sterile (fs(1)h) of Drosophila melanogaster (Fruit fly).